Reading from the N-terminus, the 272-residue chain is Ethanolamine ammonia-lyase small subunit (272 aa).

Valine 161, glutamate 182, and cysteine 211 together coordinate adenosylcob(III)alamin.

It belongs to the EutC family. As to quaternary structure, the basic unit is a heterodimer which dimerizes to form tetramers. The heterotetramers trimerize; 6 large subunits form a core ring with 6 small subunits projecting outwards. Adenosylcob(III)alamin is required as a cofactor.

The protein resides in the bacterial microcompartment. It catalyses the reaction ethanolamine = acetaldehyde + NH4(+). The protein operates within amine and polyamine degradation; ethanolamine degradation. Catalyzes the deamination of various vicinal amino-alcohols to oxo compounds. Allows this organism to utilize ethanolamine as the sole source of nitrogen and carbon in the presence of external vitamin B12. This is Ethanolamine ammonia-lyase small subunit from Pseudomonas putida (strain GB-1).